The following is a 68-amino-acid chain: Protein SlyX homolog (68 aa).

This sequence belongs to the SlyX family.

The chain is Protein SlyX homolog from Pseudomonas syringae pv. tomato (strain ATCC BAA-871 / DC3000).